The chain runs to 1174 residues: DNA-directed RNA polymerase subunit beta (1174 aa).

This sequence belongs to the RNA polymerase beta chain family. As to quaternary structure, the RNAP catalytic core consists of 2 alpha, 1 beta, 1 beta' and 1 omega subunit. When a sigma factor is associated with the core the holoenzyme is formed, which can initiate transcription.

It catalyses the reaction RNA(n) + a ribonucleoside 5'-triphosphate = RNA(n+1) + diphosphate. Its function is as follows. DNA-dependent RNA polymerase catalyzes the transcription of DNA into RNA using the four ribonucleoside triphosphates as substrates. This chain is DNA-directed RNA polymerase subunit beta, found in Mycolicibacterium gilvum (strain PYR-GCK) (Mycobacterium gilvum (strain PYR-GCK)).